The primary structure comprises 386 residues: MNLHEFQAKALFREHGIPVPEGVAVSDPAALGEAISSLGGDAWVVKAQVHAGGRGKAGGVRLVKGSRELEHAVGELLGGRLATHQTGPAGLPINTVLVESLTDIGRELYLSLLVDRARRRVAIMASAAGGMDIETVAAESPEKIITLHVDPAAGYMPYQGRRVAFALGLEGPQVSALVKLLGQLYRLFVDSDASLVEINPLVVTKTGELIALDAKINLDDNGLYRHQALAELRDETQEDAREARAREHELNYVRLDGNIGCMVNGAGLAMATMDLIKLHGGEPANFLDVGGGTTAARVAEAFKLILSDEAVKAVFVNIFGGIVRCDLIAEGIINAVKEVHVTVPVVVRLEGTNVDQGKQMLAESGLNIITAESLTDGARRVVASVQ.

Residues 9-244 (KALFREHGIP…ETQEDAREAR (236 aa)) enclose the ATP-grasp domain. ATP is bound by residues Lys46, 53-55 (GRG), Glu99, Thr102, and Glu107. 2 residues coordinate Mg(2+): Asn199 and Asp213. Substrate is bound by residues Asn264 and 321–323 (GIV).

The protein belongs to the succinate/malate CoA ligase beta subunit family. As to quaternary structure, heterotetramer of two alpha and two beta subunits. Mg(2+) serves as cofactor.

The catalysed reaction is succinate + ATP + CoA = succinyl-CoA + ADP + phosphate. It carries out the reaction GTP + succinate + CoA = succinyl-CoA + GDP + phosphate. It participates in carbohydrate metabolism; tricarboxylic acid cycle; succinate from succinyl-CoA (ligase route): step 1/1. Functionally, succinyl-CoA synthetase functions in the citric acid cycle (TCA), coupling the hydrolysis of succinyl-CoA to the synthesis of either ATP or GTP and thus represents the only step of substrate-level phosphorylation in the TCA. The beta subunit provides nucleotide specificity of the enzyme and binds the substrate succinate, while the binding sites for coenzyme A and phosphate are found in the alpha subunit. This is Succinate--CoA ligase [ADP-forming] subunit beta from Thioalkalivibrio sulfidiphilus (strain HL-EbGR7).